Here is a 434-residue protein sequence, read N- to C-terminus: 3-phosphoshikimate 1-carboxyvinyltransferase (434 aa).

3-phosphoshikimate is bound by residues lysine 15, serine 16, and arginine 20. Lysine 15 provides a ligand contact to phosphoenolpyruvate. Phosphoenolpyruvate-binding residues include glycine 96 and arginine 124. 3-phosphoshikimate-binding residues include serine 169, glutamine 171, serine 195, aspartate 319, and lysine 346. Position 171 (glutamine 171) interacts with phosphoenolpyruvate. Aspartate 319 functions as the Proton acceptor in the catalytic mechanism. Phosphoenolpyruvate contacts are provided by arginine 350 and arginine 394.

Belongs to the EPSP synthase family. Monomer.

The protein localises to the cytoplasm. The enzyme catalyses 3-phosphoshikimate + phosphoenolpyruvate = 5-O-(1-carboxyvinyl)-3-phosphoshikimate + phosphate. It participates in metabolic intermediate biosynthesis; chorismate biosynthesis; chorismate from D-erythrose 4-phosphate and phosphoenolpyruvate: step 6/7. Its function is as follows. Catalyzes the transfer of the enolpyruvyl moiety of phosphoenolpyruvate (PEP) to the 5-hydroxyl of shikimate-3-phosphate (S3P) to produce enolpyruvyl shikimate-3-phosphate and inorganic phosphate. In Chlorobaculum tepidum (strain ATCC 49652 / DSM 12025 / NBRC 103806 / TLS) (Chlorobium tepidum), this protein is 3-phosphoshikimate 1-carboxyvinyltransferase.